Reading from the N-terminus, the 528-residue chain is Calcium-dependent protein kinase 4 (528 aa).

A disordered region spans residues 1-36 (MGQEVSSVNNTKNEHHKTNKKSLKGGNERHEMKESS). The N-myristoyl glycine moiety is linked to residue glycine 2. The span at 14–23 (EHHKTNKKSL) shows a compositional bias: basic residues. The region spanning 71 to 329 (KGIKILGKGS…RDALEHEWIK (259 aa)) is the Protein kinase domain. ATP contacts are provided by residues 76-84 (LGKGSFGEV) and lysine 99. Aspartate 193 (proton acceptor) is an active-site residue. Positions 350 to 358 (NIRQFQSTQ) match the J domain autoinhibitory motif motif. The tract at residues 350-386 (NIRQFQSTQKLAQAALLYMGSKLTTIDETKELTKIFK) is j domain. A J domain EF-hand interaction motif motif is present at residues 359–368 (KLAQAALLYM). EF-hand domains follow at residues 376-411 (DETKELTKIFKKMDKNGDGQLDRNELIIGYKELLKL), 427-458 (EVDQILNSIDLDQNGYIEYSEFLTVSIDRKLL), 459-494 (LSTERLEKAFKLFDKDGSGKISANELAQLFGLSDVS), and 496-528 (ECWKTVLKEVDQNNDGEIDFKEFRDMLVKLCNY). Residues aspartate 389, asparagine 391, aspartate 393, glutamine 395, glutamate 400, aspartate 436, aspartate 438, asparagine 440, tyrosine 442, glutamate 447, aspartate 472, aspartate 474, serine 476, lysine 478, glutamate 483, aspartate 506, asparagine 508, aspartate 510, glutamate 512, and glutamate 517 each contribute to the Ca(2+) site.

This sequence belongs to the protein kinase superfamily. Ser/Thr protein kinase family. CDPK subfamily. May interact with the pre-replication MCM complex prior male gametogenesis activation. The cofactor is Mg(2+). In terms of processing, myristoylated; myristoylation may target it to different subcellular compartments. During male gametogenesis, myristoylation is required to initiate DNA replication but not for mitotic spindle assembly or axoneme activation. Post-translationally, not palmitoylated. May be autophosphorylated on Thr-234 in vitro.

The protein resides in the cytoplasm. It is found in the cell membrane. It catalyses the reaction L-seryl-[protein] + ATP = O-phospho-L-seryl-[protein] + ADP + H(+). The enzyme catalyses L-threonyl-[protein] + ATP = O-phospho-L-threonyl-[protein] + ADP + H(+). Activated by calcium. Upon calcium binding to the EF-hand domains, the C-terminus of the junction domain (J domain) undergoes a conformational change which results in the dissociation of the pseudo-substrate inhibitory motif from the catalytic domain. This, in turn, may facilitate the autophosphorylation of the activation loop at Thr-234, which leads to the kinase activation. Intracellular calcium increase is triggered by xanthurenic acid (XA), a small mosquito molecule that induces the differentiation of specialized transmission stages, the gametocytes, into male and female gametes. Activated by a decrease in temperature (20 degrees Celsius) and an increase in pH (7.6) occurring when the parasite is ingested by in the mosquito. Functionally, calcium-dependent protein kinase which acts as a sensor and effector of intracellular Ca(2+) levels probably in part downstream of cGMP-activated PKG kinase. Plays a central role in the host erythrocytes and hepatocytes infection cycles, sexual reproduction and mosquito transmission of the parasite. During the liver stage, involved in sporozoite motility and thus in sporozoite invasion of host hepatocytes, probably together with CDPK1 and CDPK5. Involved in merosome egress from host hepatocytes, probably together with CDPK5. During the asexual blood stage, involved in merozoite invasion of host erythrocytes and motility by stabilizing the inner membrane complex, a structure below the plasma membrane which acts as an anchor for the glidosome, an acto-myosin motor. Required for cell cycle progression in the male gametocyte. During male gametogenesis in the mosquito gut, required to initiate the first round of DNA replication, probably by facilitating the assembly of the pre-replicative MCM complex, to assemble the first mitotic spindle and, at the end of gametogenesis, to initiate axoneme motility, cytokinesis and subsequent exflagellation. For each of these steps, may phosphorylate SOC1, SOC2 and SOC3, respectively. Together with CDPK1, regulates ookinete gliding in the mosquito host midgut. The protein is Calcium-dependent protein kinase 4 of Plasmodium falciparum (isolate 3D7).